A 64-amino-acid chain; its full sequence is Translation machinery-associated protein 7 homolog (64 aa).

The segment at 1-64 (MSGREGGKKK…QGGIKKSGKK (64 aa)) is disordered. Over residues 27–44 (VAFKQKQKEQQKALDAAK) the composition is skewed to basic and acidic residues.

Belongs to the TMA7 family.

In Anopheles funestus (African malaria mosquito), this protein is Translation machinery-associated protein 7 homolog.